A 1039-amino-acid polypeptide reads, in one-letter code: Error-prone DNA polymerase (1039 aa).

Belongs to the DNA polymerase type-C family. DnaE2 subfamily.

The protein localises to the cytoplasm. The enzyme catalyses DNA(n) + a 2'-deoxyribonucleoside 5'-triphosphate = DNA(n+1) + diphosphate. In terms of biological role, DNA polymerase involved in damage-induced mutagenesis and translesion synthesis (TLS). It is not the major replicative DNA polymerase. The protein is Error-prone DNA polymerase of Idiomarina loihiensis (strain ATCC BAA-735 / DSM 15497 / L2-TR).